A 425-amino-acid polypeptide reads, in one-letter code: Glutamyl-tRNA reductase (425 aa).

Substrate-binding positions include 49-52, serine 107, 112-114, and glutamine 118; these read TCNR and EPQ. Cysteine 50 serves as the catalytic Nucleophile. NADP(+) is bound at residue 187–192; it reads GAGETI.

Belongs to the glutamyl-tRNA reductase family. In terms of assembly, homodimer.

The catalysed reaction is (S)-4-amino-5-oxopentanoate + tRNA(Glu) + NADP(+) = L-glutamyl-tRNA(Glu) + NADPH + H(+). It functions in the pathway porphyrin-containing compound metabolism; protoporphyrin-IX biosynthesis; 5-aminolevulinate from L-glutamyl-tRNA(Glu): step 1/2. Functionally, catalyzes the NADPH-dependent reduction of glutamyl-tRNA(Glu) to glutamate 1-semialdehyde (GSA). In Pseudomonas putida (strain GB-1), this protein is Glutamyl-tRNA reductase.